Consider the following 244-residue polypeptide: 2-C-methyl-D-erythritol 4-phosphate cytidylyltransferase (244 aa).

The protein belongs to the IspD/TarI cytidylyltransferase family. IspD subfamily.

It carries out the reaction 2-C-methyl-D-erythritol 4-phosphate + CTP + H(+) = 4-CDP-2-C-methyl-D-erythritol + diphosphate. It participates in isoprenoid biosynthesis; isopentenyl diphosphate biosynthesis via DXP pathway; isopentenyl diphosphate from 1-deoxy-D-xylulose 5-phosphate: step 2/6. Catalyzes the formation of 4-diphosphocytidyl-2-C-methyl-D-erythritol from CTP and 2-C-methyl-D-erythritol 4-phosphate (MEP). The sequence is that of 2-C-methyl-D-erythritol 4-phosphate cytidylyltransferase from Corynebacterium diphtheriae (strain ATCC 700971 / NCTC 13129 / Biotype gravis).